A 186-amino-acid chain; its full sequence is Probable chorismate pyruvate-lyase (186 aa).

The substrate site is built by R77, L115, and E174.

The protein belongs to the UbiC family.

It is found in the cytoplasm. It carries out the reaction chorismate = 4-hydroxybenzoate + pyruvate. The protein operates within cofactor biosynthesis; ubiquinone biosynthesis. Removes the pyruvyl group from chorismate, with concomitant aromatization of the ring, to provide 4-hydroxybenzoate (4HB) for the ubiquinone pathway. The protein is Probable chorismate pyruvate-lyase of Shewanella sp. (strain W3-18-1).